We begin with the raw amino-acid sequence, 1060 residues long: DNA-directed RNA polymerase subunit beta (1060 aa).

Belongs to the RNA polymerase beta chain family. As to quaternary structure, in plastids the minimal PEP RNA polymerase catalytic core is composed of four subunits: alpha, beta, beta', and beta''. When a (nuclear-encoded) sigma factor is associated with the core the holoenzyme is formed, which can initiate transcription.

It is found in the plastid. The protein localises to the chloroplast. It catalyses the reaction RNA(n) + a ribonucleoside 5'-triphosphate = RNA(n+1) + diphosphate. In terms of biological role, DNA-dependent RNA polymerase catalyzes the transcription of DNA into RNA using the four ribonucleoside triphosphates as substrates. This is DNA-directed RNA polymerase subunit beta from Helianthus annuus (Common sunflower).